A 96-amino-acid polypeptide reads, in one-letter code: Ribonuclease P protein component 1 (96 aa).

It belongs to the eukaryotic/archaeal RNase P protein component 1 family. Consists of a catalytic RNA component and at least 4-5 protein subunits.

It is found in the cytoplasm. It catalyses the reaction Endonucleolytic cleavage of RNA, removing 5'-extranucleotides from tRNA precursor.. Functionally, part of ribonuclease P, a protein complex that generates mature tRNA molecules by cleaving their 5'-ends. The protein is Ribonuclease P protein component 1 of Methanococcus aeolicus (strain ATCC BAA-1280 / DSM 17508 / OCM 812 / Nankai-3).